The primary structure comprises 415 residues: ATP-dependent Clp protease ATP-binding subunit ClpX (415 aa).

In terms of domain architecture, ClpX-type ZB spans 1-52; the sequence is MAESKNNKKRCSFCGRSENEVGFLITGMNGYICDSCATQAYEITQEAMGAGK. Residues C11, C14, C33, and C36 each coordinate Zn(2+). ATP is bound at residue 121–128; that stretch reads STGTGKTL.

This sequence belongs to the ClpX chaperone family. In terms of assembly, component of the ClpX-ClpP complex. Forms a hexameric ring that, in the presence of ATP, binds to fourteen ClpP subunits assembled into a disk-like structure with a central cavity, resembling the structure of eukaryotic proteasomes.

Functionally, ATP-dependent specificity component of the Clp protease. It directs the protease to specific substrates. Can perform chaperone functions in the absence of ClpP. In Bacteroides fragilis (strain ATCC 25285 / DSM 2151 / CCUG 4856 / JCM 11019 / LMG 10263 / NCTC 9343 / Onslow / VPI 2553 / EN-2), this protein is ATP-dependent Clp protease ATP-binding subunit ClpX.